The primary structure comprises 603 residues: UvrABC system protein C (603 aa).

A GIY-YIG domain is found at 15 to 92; it reads DKPGCYLMKN…IQKHQPYFNI (78 aa). The UVR domain maps to 197 to 232; it reads ATVKRQLTKKMQRAAENMEFERAAEIRDQLHYIEVT.

This sequence belongs to the UvrC family. As to quaternary structure, interacts with UvrB in an incision complex.

It is found in the cytoplasm. The UvrABC repair system catalyzes the recognition and processing of DNA lesions. UvrC both incises the 5' and 3' sides of the lesion. The N-terminal half is responsible for the 3' incision and the C-terminal half is responsible for the 5' incision. This is UvrABC system protein C from Limosilactobacillus reuteri (strain DSM 20016) (Lactobacillus reuteri).